We begin with the raw amino-acid sequence, 356 residues long: MSTVTITDLARENVRNLTPYQSARRLGGNGDVWLNANEYPTAVEFQLTQQTLNRYPECQPKAVIENYAQYAGVKPEQVLVSCGADEGIELLIRAFCEPGKDAILYCPPTYGMYSVSAETIGVECRTVPTLENWQLDLQGISDKLDGVKVVYVCSPNNPTGQLINPQDFRTLLELTRGKAIVVADEAYIEFCPQASLAGWLAEYPHLAILRTLSKAFALAGLRCGFTLANEEVINLLMKVIAPYPLSTPVADIAAQALSPQGIVAMRERVAQIIAEREYLIAALKEISCVEQVFDSETNYILARFKASSAVFKSLWDQGIILRDQNKQPSLSGCLRITVGTREESQRVIDALRAEQV.

Position 214 is an N6-(pyridoxal phosphate)lysine (K214).

This sequence belongs to the class-II pyridoxal-phosphate-dependent aminotransferase family. Histidinol-phosphate aminotransferase subfamily. Homodimer. Requires pyridoxal 5'-phosphate as cofactor.

The enzyme catalyses L-histidinol phosphate + 2-oxoglutarate = 3-(imidazol-4-yl)-2-oxopropyl phosphate + L-glutamate. It participates in amino-acid biosynthesis; L-histidine biosynthesis; L-histidine from 5-phospho-alpha-D-ribose 1-diphosphate: step 7/9. The polypeptide is Histidinol-phosphate aminotransferase (Shigella dysenteriae serotype 1 (strain Sd197)).